We begin with the raw amino-acid sequence, 612 residues long: Isocitrate dehydrogenase kinase/phosphatase (612 aa).

ATP is bound by residues 327-333 (APGIKGL) and Lys348. The active site involves Asp383. Residues 593 to 612 (AGRASPEPDAPADARSVRVA) form a disordered region.

Belongs to the AceK family.

It localises to the cytoplasm. The catalysed reaction is L-seryl-[isocitrate dehydrogenase] + ATP = O-phospho-L-seryl-[isocitrate dehydrogenase] + ADP + H(+). Functionally, bifunctional enzyme which can phosphorylate or dephosphorylate isocitrate dehydrogenase (IDH) on a specific serine residue. This is a regulatory mechanism which enables bacteria to bypass the Krebs cycle via the glyoxylate shunt in response to the source of carbon. When bacteria are grown on glucose, IDH is fully active and unphosphorylated, but when grown on acetate or ethanol, the activity of IDH declines drastically concomitant with its phosphorylation. The sequence is that of Isocitrate dehydrogenase kinase/phosphatase from Paraburkholderia phytofirmans (strain DSM 17436 / LMG 22146 / PsJN) (Burkholderia phytofirmans).